The chain runs to 416 residues: Tyrosine--tRNA ligase (416 aa).

L-tyrosine is bound at residue tyrosine 37. The 'HIGH' region motif lies at 42 to 51; it reads PTADSLHVGN. L-tyrosine is bound by residues tyrosine 176 and glutamine 180. The short motif at 236–240 is the 'KMSKS' region element; it reads KMGKS. An ATP-binding site is contributed by lysine 239. The S4 RNA-binding domain occupies 350 to 416; it reads LPAFRVFQEA…KKKHILLRPV (67 aa).

This sequence belongs to the class-I aminoacyl-tRNA synthetase family. TyrS type 1 subfamily. Homodimer.

Its subcellular location is the cytoplasm. It catalyses the reaction tRNA(Tyr) + L-tyrosine + ATP = L-tyrosyl-tRNA(Tyr) + AMP + diphosphate + H(+). Its function is as follows. Catalyzes the attachment of tyrosine to tRNA(Tyr) in a two-step reaction: tyrosine is first activated by ATP to form Tyr-AMP and then transferred to the acceptor end of tRNA(Tyr). The polypeptide is Tyrosine--tRNA ligase (Gluconobacter oxydans (strain 621H) (Gluconobacter suboxydans)).